A 181-amino-acid polypeptide reads, in one-letter code: Peptidyl-tRNA hydrolase (181 aa).

Tyr14 serves as a coordination point for tRNA. The active-site Proton acceptor is the His19. Residues Tyr62, Asn64, and Asn108 each contribute to the tRNA site.

This sequence belongs to the PTH family. As to quaternary structure, monomer.

The protein resides in the cytoplasm. The enzyme catalyses an N-acyl-L-alpha-aminoacyl-tRNA + H2O = an N-acyl-L-amino acid + a tRNA + H(+). Hydrolyzes ribosome-free peptidyl-tRNAs (with 1 or more amino acids incorporated), which drop off the ribosome during protein synthesis, or as a result of ribosome stalling. In terms of biological role, catalyzes the release of premature peptidyl moieties from peptidyl-tRNA molecules trapped in stalled 50S ribosomal subunits, and thus maintains levels of free tRNAs and 50S ribosomes. The polypeptide is Peptidyl-tRNA hydrolase (Campylobacter jejuni subsp. doylei (strain ATCC BAA-1458 / RM4099 / 269.97)).